The sequence spans 476 residues: Homeobox protein invected (476 aa).

Disordered regions lie at residues 1–43 (MAAV…SEDI), 273–331 (KTRY…TSGD), and 347–381 (DRPS…AFSG). The span at 23–32 (SPNTRDTTSP) shows a compositional bias: polar residues. Basic and acidic residues-rich tracts occupy residues 33–43 (ECHDDEKSEDI) and 292–305 (KLDE…KTPD). The span at 318–331 (GSNSGSTSGATSGD) shows a compositional bias: low complexity. The segment at residues 372-431 (EKRPRTAFSGPQLARLKHEFAENRYLTERRRQSLAAELGLAEAQIKIWFQNKRAKIKKAS) is a DNA-binding region (homeobox).

Belongs to the engrailed homeobox family. As to expression, expressed in the middle silk gland but not in the posterior silk gland during the fourth molt/fifth intermolt period.

It localises to the nucleus. Functionally, this protein might be involved in the compartmentalization of the silk gland. This is Homeobox protein invected (INV) from Bombyx mori (Silk moth).